Consider the following 171-residue polypeptide: uncharacterized protein (171 aa).

2 disordered regions span residues 68-124 (NKNN…ASQQ) and 140-171 (GDED…SIKN). Positions 141-160 (DEDKGMDSTLKLPERTKRDS) are enriched in basic and acidic residues.

It belongs to the asfivirus H171R family.

The protein localises to the virion. This is an uncharacterized protein from Ornithodoros (relapsing fever ticks).